Consider the following 869-residue polypeptide: Structure-specific endonuclease subunit SLX4 (869 aa).

The span at 40–59 (SPLSLPSPTSLLDFLSTSTS) shows a compositional bias: low complexity. Disordered stretches follow at residues 40–79 (SPLS…EVLD), 92–116 (NRVV…ESPG), 165–199 (KANQ…INDL), 293–323 (GLSD…NPPK), 351–388 (TLLS…KKNE), 418–437 (ANGH…HISN), and 630–774 (KTSN…ASET). Over residues 63 to 79 (ARSDTDGDKTQGKEVLD) the composition is skewed to basic and acidic residues. Polar residues-rich tracts occupy residues 165–174 (KANQTVSLQP) and 294–311 (LSDS…SATS). Residues 312-322 (KPRRVKAKNPP) are compositionally biased toward basic residues. Composition is skewed to polar residues over residues 647-657 (VDESTQGQSLG) and 664-673 (SIPQTATTQV). The span at 688-700 (VPVPSRRSTSTSK) shows a compositional bias: low complexity. Residues 765–774 (IPSTGTASET) show a composition bias toward polar residues.

It belongs to the SLX4 family. As to quaternary structure, forms a heterodimer with SLX1. In terms of processing, phosphorylated in response to DNA damage.

It is found in the nucleus. Regulatory subunit of the SLX1-SLX4 structure-specific endonuclease that resolves DNA secondary structures generated during DNA repair and recombination. Has endonuclease activity towards branched DNA substrates, introducing single-strand cuts in duplex DNA close to junctions with ss-DNA. This chain is Structure-specific endonuclease subunit SLX4, found in Paracoccidioides brasiliensis (strain Pb18).